The primary structure comprises 527 residues: Peptide chain release factor 3 (527 aa).

In terms of domain architecture, tr-type G spans 9 to 277 (AKRRTFAIIS…AVVDWAPRPL (269 aa)). Residues 18–25 (SHPDAGKT), 86–90 (DTPGH), and 140–143 (NKLD) each bind GTP.

It belongs to the TRAFAC class translation factor GTPase superfamily. Classic translation factor GTPase family. PrfC subfamily.

The protein localises to the cytoplasm. Functionally, increases the formation of ribosomal termination complexes and stimulates activities of RF-1 and RF-2. It binds guanine nucleotides and has strong preference for UGA stop codons. It may interact directly with the ribosome. The stimulation of RF-1 and RF-2 is significantly reduced by GTP and GDP, but not by GMP. The polypeptide is Peptide chain release factor 3 (Pseudomonas fluorescens (strain SBW25)).